Consider the following 394-residue polypeptide: Acryloyl-CoA reductase (NADH) (394 aa).

FAD-binding positions include 135 to 144 and 170 to 172; these read FALTEPNAGS and FIS. A substrate-binding site is contributed by S144. Position 254 to 257 (254 to 257) interacts with substrate; sequence DGAR. FAD contacts are provided by residues R282, Q293, and 350–354; that span reads QIHGG. The active-site Proton acceptor is the E377. A substrate-binding site is contributed by G378. FAD is bound at residue 379 to 381; sequence TSE.

Heterohexadecamer; tetramer of tetramers. Each tetramer is composed of 2 alpha (AcrC), a beta (AcrA) and a gamma (AcrB) subunit. The cofactor is FAD.

It is found in the cytoplasm. The enzyme catalyses propanoyl-CoA + NAD(+) = acryloyl-CoA + NADH + H(+). Its function is as follows. Probable catalytic subunit of the acryloyl-CoA reductase complex involved in the pathway of L-alanine fermentation. Catalyzes the irreversible NADH-dependent formation of propionyl-CoA from acryloyl-CoA. It can also use 3-buten-2-one as substrate. The protein is Acryloyl-CoA reductase (NADH) (acrC) of Anaerotignum propionicum (Clostridium propionicum).